We begin with the raw amino-acid sequence, 304 residues long: Protein PagO (304 aa).

The next 10 membrane-spanning stretches (helical) occupy residues 4 to 24, 34 to 54, 67 to 87, 95 to 115, 119 to 139, 150 to 170, 180 to 200, 214 to 234, 246 to 266, and 267 to 287; these read VSIS…WLAM, VFAT…IAWL, LFQF…MIYG, LAAI…VLFL, AKLM…GILL, WQGI…YTQC, ITFN…TGWF, ILAT…CYFA, LVFL…YGYA, and ISTH…LTLV. EamA domains follow at residues 15–139 and 161–287; these read LTWG…GILL and LIHA…LTLV.

This sequence belongs to the EamA transporter family.

It is found in the cell membrane. The polypeptide is Protein PagO (pagO) (Salmonella typhimurium (strain LT2 / SGSC1412 / ATCC 700720)).